Consider the following 123-residue polypeptide: Holo-[acyl-carrier-protein] synthase (123 aa).

Mg(2+) contacts are provided by aspartate 8 and glutamate 56.

The protein belongs to the P-Pant transferase superfamily. AcpS family. Requires Mg(2+) as cofactor.

Its subcellular location is the cytoplasm. It carries out the reaction apo-[ACP] + CoA = holo-[ACP] + adenosine 3',5'-bisphosphate + H(+). Functionally, transfers the 4'-phosphopantetheine moiety from coenzyme A to a Ser of acyl-carrier-protein. This is Holo-[acyl-carrier-protein] synthase from Treponema denticola (strain ATCC 35405 / DSM 14222 / CIP 103919 / JCM 8153 / KCTC 15104).